A 103-amino-acid chain; its full sequence is Colicin-V (103 aa).

Residues 1–15 constitute a propeptide that is removed on maturation; the sequence is MRTLTLNELDSVSGG. A disulfide bond links C91 and C102.

It is found in the secreted. In terms of biological role, colicin V kills sensitive cells by disrupting the membrane potential. Its function is as follows. Colicins are polypeptide toxins produced by, and active against E.coli and closely related bacteria. The protein is Colicin-V (cvaC) of Escherichia coli.